Here is a 149-residue protein sequence, read N- to C-terminus: Large ribosomal subunit protein uL24 (149 aa).

The disordered stretch occupies residues 114-149 (RKIIERSGGTPEVEAVPEKSEEEKEEKEKEEEKSEE). Over residues 129–149 (VPEKSEEEKEEKEKEEEKSEE) the composition is skewed to basic and acidic residues.

This sequence belongs to the universal ribosomal protein uL24 family. As to quaternary structure, part of the 50S ribosomal subunit.

In terms of biological role, one of two assembly initiator proteins, it binds directly to the 5'-end of the 23S rRNA, where it nucleates assembly of the 50S subunit. Functionally, located at the polypeptide exit tunnel on the outside of the subunit. In Methanopyrus kandleri (strain AV19 / DSM 6324 / JCM 9639 / NBRC 100938), this protein is Large ribosomal subunit protein uL24.